The sequence spans 321 residues: Sex-lethal homolog (321 aa).

2 RRM domains span residues 78 to 156 and 164 to 244; these read TNLI…FARP and TNLY…VAEE.

Expressed in gonads and somatic tissues of both sexes. In the ovary, expressed in the last egg chamber of each ovariole. Highly expressed in nurse cells with low expression found in oocytes. Highly expressed in testis with lower expression in testis sheath and vas deferentia.

The protein localises to the nucleus. In terms of biological role, unknown; apparently not involved in somatic sex determination. This Megaselia scalaris (Humpbacked fly) protein is Sex-lethal homolog (SXL).